The following is a 655-amino-acid chain: Macrolide export ATP-binding/permease protein MacB (655 aa).

Residues 6–244 (IVLRGLRREY…VAAPTAAAAQ (239 aa)) enclose the ABC transporter domain. ATP is bound at residue 42-49 (GASGSGKS). 4 consecutive transmembrane segments (helical) span residues 279–299 (FLTMLGIIIGIASVVFIVAVG), 528–548 (LTLMIAAIAVISLVVGGIGVM), 579–599 (FLIEAVMVCLIGGGLGVAVAY), and 618–638 (AGSIIAAFICSTGIGVVFGYL).

Belongs to the ABC transporter superfamily. Macrolide exporter (TC 3.A.1.122) family. As to quaternary structure, homodimer.

It is found in the cell inner membrane. Functionally, non-canonical ABC transporter that contains transmembrane domains (TMD), which form a pore in the inner membrane, and an ATP-binding domain (NBD), which is responsible for energy generation. Confers resistance against macrolides. In Rhodopseudomonas palustris (strain BisB18), this protein is Macrolide export ATP-binding/permease protein MacB.